We begin with the raw amino-acid sequence, 559 residues long: MSESASMLQGSKRGTDSSVDVGGAKRTKVDMDDGSSSNNDEKELLEATKADELDEVVDDYAEQNDHSAQEVAGEYVPKKPEQPIMLTKDSNSGKYVFPPISKEDSLNARYFLKYHGSAQFLDSYLPEDLNSLYVFHLIKLLGFQLKDRELLTAVQKAVQNDVTSGVSSVVGTNPMVERVSPPQLSASTPSGDGYDDPLEKKHAVRLIKDLQKAMNKVLSTRIRLANFFTLDHFISKLKSAKKVLVLTGAGISTSLGIPDFRSSKGFYSQVTNLGLDDPQDVFNLDIFMENPSVFYTIAEKILPPEHKFSPLHSFIKMIQDKGKLLRNYTQNIDNLESYAGIFKENIVQCHGSFATASCVTCHLKMPGERIFQQIKDREIPLCAYCYPKRQEEYPTVSDDPGTKNGQQSSHNSSSIFHMSRSFGVIKPDITFFGEALPLEFHTNIRQDVLQCDLLICIGTSLKVAPVSEIVNMVPAHVPQVLINRDPVKHAEFDLTLLGLCDDVAAFIAQKCGWDIPHENWPQLKQRNIQYDELERGMYYVYDPVKEQAKDTGQRQVQAP.

The segment at 1–73 (MSESASMLQG…NDHSAQEVAG (73 aa)) is disordered. Over residues 39–51 (NDEKELLEATKAD) the composition is skewed to basic and acidic residues. The span at 52–62 (ELDEVVDDYAE) shows a compositional bias: acidic residues. The region spanning 223–514 (RLANFFTLDH…AFIAQKCGWD (292 aa)) is the Deacetylase sirtuin-type domain. Residues 248–267 (GAGISTSLGIPDFRSSKGFY) and 330–333 (QNID) each bind NAD(+). Histidine 350 functions as the Proton acceptor in the catalytic mechanism. Residues cysteine 358, cysteine 361, cysteine 382, and cysteine 385 each contribute to the Zn(2+) site. Residues 458–460 (GTS), 483–485 (NRD), and cysteine 500 each bind NAD(+).

The protein belongs to the sirtuin family. Class I subfamily. The cofactor is Zn(2+).

The protein resides in the nucleus. It catalyses the reaction N(6)-acetyl-L-lysyl-[protein] + NAD(+) + H2O = 2''-O-acetyl-ADP-D-ribose + nicotinamide + L-lysyl-[protein]. Functionally, NAD-dependent deacetylase. Heterochromatin component that silences transcription at silent mating loci, telomeres and the ribosomal DNA, and that also suppresses recombination in the rDNA and extends replicative life span. It acts as a NAD-dependent histone deacetylase, which deacetylates 'Lys-9' and 'Lys-14' of Histone H3 and 'Lys-16' of Histone H4. The polypeptide is NAD-dependent histone deacetylase SIR2 (SIR2) (Eremothecium gossypii (strain ATCC 10895 / CBS 109.51 / FGSC 9923 / NRRL Y-1056) (Yeast)).